Reading from the N-terminus, the 366-residue chain is Variable large protein 10 (366 aa).

Residues 1–18 (MRKRISAIIMTLFMVLAS) form the signal peptide. A lipid anchor (N-palmitoyl cysteine) is attached at Cys-19. Residue Cys-19 is the site of S-diacylglycerol cysteine attachment.

This sequence belongs to the variable large protein (Vlp) family. Beta subfamily.

Its subcellular location is the cell outer membrane. Its function is as follows. The Vlp and Vsp proteins are antigenically distinct proteins, only one vlp or vsp gene is transcriptionally active at any one time. Switching between these genes is a mechanism of host immune response evasion. The polypeptide is Variable large protein 10 (Borrelia hermsii).